The sequence spans 673 residues: Beta-galactosidase GalA (673 aa).

R105 is a substrate binding site. C109 contributes to the Zn(2+) binding site. N143 provides a ligand contact to substrate. E144 (proton donor) is an active-site residue. Residues C149, C151, and C154 each coordinate Zn(2+). E308 serves as the catalytic Nucleophile. Substrate is bound by residues W316 and 356 to 359; that span reads EKFH.

Belongs to the glycosyl hydrolase 42 family. In terms of assembly, homodimer.

It carries out the reaction Hydrolysis of terminal non-reducing beta-D-galactose residues in beta-D-galactosides.. Its activity is regulated as follows. Inhibited by hydrolysis end products D-galactose and D-glucose. The hydrolysis of o-nitrophenyl-beta-D-galactopyranoside (ONPG) is slightly activated by monovalent ions, Na(+) and K(+). Concentrations of these ions in the range of 1-100 mM exert the stimulating effects. The presence of 1 mM Mn(2+) together with the presence of 10 mM Na(+) slightly stimulates the activity, while presence of 10 mM Mn(2+) inhibits the activity by about 40%. Its function is as follows. Catalyzes the hydrolysis of lactose to its constituent monosaccharides glucose and galactose. Possesses a low level of transgalactosylation activity for the production of galacto-oligosaccharides (GOS) from lactose. The polypeptide is Beta-galactosidase GalA (Bacillus licheniformis (strain ATCC 14580 / DSM 13 / JCM 2505 / CCUG 7422 / NBRC 12200 / NCIMB 9375 / NCTC 10341 / NRRL NRS-1264 / Gibson 46)).